The sequence spans 332 residues: MMKKPVVIGLAVVVLAAVVAGGYWWYQSRQDNGLTLYGNVDIRTVNLSFRVGGRVESLAVDEGDAIKAGQVLGELDHKPYEIALMQAKAGVSVAQAQYDLMLAGYRDEEIAQAAAAVKQAQAAYDYAQNFYNRQQGLWKSRTISANDLENARSSRDQAQATLKSAQDKLRQYRSGNREQDIAQAKASLEQAQAQLAQAELNLQDSTLVAPSDGTLLTRAVEPGTVLNEGGTVFTVSLTRPVWVRAYVDERNLDQAQPGRKVLLYTDGRPNKPYHGQIGFVSPTAEFTPKTVETPDLRTDLVYRLRIVVTDADDALRQGMPVTVQFGDEAGHE.

The signal sequence occupies residues 1–16; that stretch reads MMKKPVVIGLAVVVLA. The stretch at 108–211 forms a coiled coil; it reads EEIAQAAAAV…LQDSTLVAPS (104 aa).

Belongs to the UPF0194 family.

It localises to the periplasm. This Escherichia coli O6:H1 (strain CFT073 / ATCC 700928 / UPEC) protein is UPF0194 membrane protein YbhG.